The sequence spans 402 residues: uncharacterized protein (402 aa).

9 consecutive transmembrane segments (helical) span residues 13-33 (IGVLDVLRGMAIFGILFVNLA), 68-88 (FFIQTKCILLFSFLFGFGMVV), 108-128 (LMALLLFGTIHAFLIWDGDIL), 149-169 (LLIWAVSLYLLFSIPFMLTSF), 223-243 (LNYFFASIPYFSMFLLGAAAA), 261-281 (LWMAGLVIGIGAQVLYSVTDK), 283-303 (ICLLIGAPFLMFFYVTTVVYL), 327-347 (YLMQSIVCTWIFYHYGLGLYG), and 353-373 (AGVLITIAVCAVQMVFSHLWL).

It is found in the cell membrane. Involved in transport. This is an uncharacterized protein from Bacillus subtilis (strain 168).